A 78-amino-acid chain; its full sequence is UPF0349 protein SAHV_0934 (78 aa).

Belongs to the UPF0349 family.

This Staphylococcus aureus (strain Mu3 / ATCC 700698) protein is UPF0349 protein SAHV_0934.